A 315-amino-acid polypeptide reads, in one-letter code: Ribosomal RNA small subunit methyltransferase H (315 aa).

S-adenosyl-L-methionine-binding positions include Ala33 to His35, Asp53, Phe80, Asp101, and Gln108.

The protein belongs to the methyltransferase superfamily. RsmH family.

It localises to the cytoplasm. The enzyme catalyses cytidine(1402) in 16S rRNA + S-adenosyl-L-methionine = N(4)-methylcytidine(1402) in 16S rRNA + S-adenosyl-L-homocysteine + H(+). Functionally, specifically methylates the N4 position of cytidine in position 1402 (C1402) of 16S rRNA. This chain is Ribosomal RNA small subunit methyltransferase H, found in Natranaerobius thermophilus (strain ATCC BAA-1301 / DSM 18059 / JW/NM-WN-LF).